The following is a 467-amino-acid chain: H(+)/Cl(-) exchange transporter ClcA (467 aa).

Over 1–30 (MTKRERIIQSVLVKVPKDAINQFLSHGSTP) the chain is Cytoplasmic. A helical membrane pass occupies residues 31-67 (ISVLFLAALVGVLAGLVGTYFEIAVHFVSETRTEWLK). Topologically, residues 68–74 (SEIGHLL) are periplasmic. The chain crosses the membrane as a helical span at residues 75–98 (PLWLAAILISAALAFVGYFLVHRF). Positions 104–108 (GSGIP) match the Selectivity filter part_1 motif. Residue Ser-105 participates in chloride binding. Residues 107–114 (IPEIEGAM) constitute an intramembrane region (helical). The Cytoplasmic portion of the chain corresponds to 115 to 121 (DNIRPVR). The next 2 membrane-spanning stretches (helical) occupy residues 122-139 (WWRV…ALGS) and 146-164 (EGPT…TDIF). Residues 144 to 148 (GREGP) carry the Selectivity filter part_2 motif. Residues 165 to 174 (RVKDDDTRHS) lie on the Cytoplasmic side of the membrane. 2 intramembrane regions (helical) span residues 175 to 187 (LLAS…LAAA) and 191 to 199 (PLAGIMFVV). The Cytoplasmic portion of the chain corresponds to 200–212 (EEMRPQFRYSLIS). A helical transmembrane segment spans residues 213–230 (IRAVIISAVMANIVFRAI). At 231 to 250 (NGQDAVITMPQYQPPELKAL) the chain is on the periplasmic side. The chain crosses the membrane as a helical span at residues 251 to 279 (WLFLLLGGLFGVFGVLFNKLVTVAQDAFV). The Cytoplasmic segment spans residues 280–285 (ALHKND). The chain crosses the membrane as a helical span at residues 286 to 307 (RKRYLITGTCLGGIFGLLLLYV). Over 308 to 327 (PELTGGGIHLIPDVTNGNYS) the chain is Periplasmic. 2 helical membrane passes run 328–347 (VSLL…ICFG) and 353–374 (GIFA…ATAK). Positions 353–357 (GIFAP) match the Selectivity filter part_3 motif. The chloride site is built by Ile-354 and Phe-355. Topologically, residues 375–384 (ILLPDLPIEP) are periplasmic. An intramembrane region (helical) is located at residues 385–399 (GMFAIAGMGALFAAT). Positions 400–402 (VRA) form an intramembrane region, note=Loop between two helices. Residues 403-414 (PITGILLVIEMT) constitute an intramembrane region (helical). An intramembrane region (note=Loop between two helices) is located at residues 415-419 (NNYYL). Residues 420-436 (ILPLIITSLGAVICAQI) traverse the membrane as a helical segment. At 437–467 (CGGKPIYSQLLHRTIKNDKLRQQDLPEQQNS) the chain is on the cytoplasmic side. Residue Tyr-443 coordinates chloride.

This sequence belongs to the chloride channel (TC 2.A.49) family. ClcA subfamily. As to quaternary structure, homodimer.

It is found in the cell inner membrane. The catalysed reaction is 2 chloride(in) + H(+)(out) = 2 chloride(out) + H(+)(in). In terms of biological role, proton-coupled chloride transporter. Functions as antiport system and exchanges two chloride ions for 1 proton. Probably acts as an electrical shunt for an outwardly-directed proton pump that is linked to amino acid decarboxylation, as part of the extreme acid resistance (XAR) response. The sequence is that of H(+)/Cl(-) exchange transporter ClcA from Vibrio vulnificus (strain CMCP6).